The primary structure comprises 1423 residues: DNA-directed RNA polymerase subunit beta' (1423 aa).

Zn(2+) contacts are provided by Cys70, Cys72, Cys85, and Cys88. Mg(2+) contacts are provided by Asp461, Asp463, and Asp465. Cys809, Cys883, Cys890, and Cys893 together coordinate Zn(2+). A disordered region spans residues Glu1383–Glu1423.

The protein belongs to the RNA polymerase beta' chain family. As to quaternary structure, the RNAP catalytic core consists of 2 alpha, 1 beta, 1 beta' and 1 omega subunit. When a sigma factor is associated with the core the holoenzyme is formed, which can initiate transcription. Requires Mg(2+) as cofactor. The cofactor is Zn(2+).

It catalyses the reaction RNA(n) + a ribonucleoside 5'-triphosphate = RNA(n+1) + diphosphate. DNA-dependent RNA polymerase catalyzes the transcription of DNA into RNA using the four ribonucleoside triphosphates as substrates. The sequence is that of DNA-directed RNA polymerase subunit beta' from Rhizorhabdus wittichii (strain DSM 6014 / CCUG 31198 / JCM 15750 / NBRC 105917 / EY 4224 / RW1) (Sphingomonas wittichii).